A 146-amino-acid polypeptide reads, in one-letter code: Putative inactive cytochrome P450 2G1 (146 aa).

C91 is a heme binding site.

This sequence belongs to the cytochrome P450 family. Requires heme as cofactor.

This is Putative inactive cytochrome P450 2G1 (CYP2G1P) from Homo sapiens (Human).